A 401-amino-acid polypeptide reads, in one-letter code: Transcription factor atf-2 (401 aa).

A compositionally biased stretch (low complexity) spans 19–38 (SASAEFSSSSSDSSNFSEGS). Residues 19–78 (SASAEFSSSSSDSSNFSEGSPPESRRNSVNESVIKDEHYWERRRRNNDASRRSREKRRQN) form a disordered region. Residues 41–78 (ESRRNSVNESVIKDEHYWERRRRNNDASRRSREKRRQN) show a composition bias toward basic and acidic residues. Positions 54-100 (DEHYWERRRRNNDASRRSREKRRQNDLAMEEKIMLLSAENERLKSQL) constitute a bZIP 1 domain. Residues 60-85 (RRRRNNDASRRSREKRRQNDLAMEEK) form a basic motif 1 region. The interval 89-96 (LSAENERL) is leucine-zipper 1. Residues 181–211 (SASSLFSSSSSSAFHPFRPSESAQQSFPSSS) show a composition bias toward low complexity. Disordered regions lie at residues 181–256 (SASS…PQPV) and 273–345 (QRRP…AAKR). Composition is skewed to polar residues over residues 222 to 256 (DSSTDVNMPQPQLQPGSSVIQQIGQPAPSGTPQPV) and 273 to 283 (QRRPSPTVPQS). Positions 305 to 317 (ESVSSSASFSPSH) are enriched in low complexity. Residues 329–392 (SPQYVDRRRR…AHFKSVLAQR (64 aa)) enclose the bZIP 2 domain. Positions 335–360 (RRRRNNEAAKRCRANRRAVFEYRSRR) are basic motif 2. Residues 361–388 (VQLLEGENEDLRTQIETLKAEIAHFKSV) adopt a coiled-coil conformation. The tract at residues 364 to 378 (LEGENEDLRTQIETL) is leucine-zipper 2.

Belongs to the bZIP family. As to quaternary structure, interacts with cell death specification protein ces-2. Phosphorylated by mitogen-activated protein kinases pmk-2 and pmk-3. May be responsive to osmotic stress.

It is found in the nucleus. Acts as a transcription factor that recognizes and binds to the sequence 5'-[GA]TTA[CT]GTAA[CT]-3', a sequence present in many promoters. Involved in the development of the excretory duct cell, by positively modulating embryonic transcription of putative transcription factor lin-48, acting in concert with cell death specification protein ces-2. Negatively modulates expression of key autophagy-related genes, bec-1/ATG6 and lgg-1/ATG8, and may link together autophagy and apoptosis during development. Positively modulates expression of neuropeptide pigment dispersing factor homologs pdf-1 and pdf-2. In Caenorhabditis elegans, this protein is Transcription factor atf-2.